We begin with the raw amino-acid sequence, 366 residues long: Carbamoyl phosphate synthase small chain (366 aa).

Residues 1–171 form a CPSase region; that stretch reads MKKRKLILED…KPYVVPGRGL (171 aa). L-glutamine is bound by residues Ser-46, Gly-220, and Gly-222. In terms of domain architecture, Glutamine amidotransferase type-1 spans 172–359; it reads RVVMVDFGAK…LNLIKASKVK (188 aa). Cys-247 functions as the Nucleophile in the catalytic mechanism. Residues Leu-248, Gln-251, Asn-289, and Tyr-292 each coordinate L-glutamine. Active-site residues include His-332 and Glu-334.

Belongs to the CarA family. Composed of two chains; the small (or glutamine) chain promotes the hydrolysis of glutamine to ammonia, which is used by the large (or ammonia) chain to synthesize carbamoyl phosphate. Tetramer of heterodimers (alpha,beta)4.

The enzyme catalyses hydrogencarbonate + L-glutamine + 2 ATP + H2O = carbamoyl phosphate + L-glutamate + 2 ADP + phosphate + 2 H(+). It catalyses the reaction L-glutamine + H2O = L-glutamate + NH4(+). It functions in the pathway amino-acid biosynthesis; L-arginine biosynthesis; carbamoyl phosphate from bicarbonate: step 1/1. Its pathway is pyrimidine metabolism; UMP biosynthesis via de novo pathway; (S)-dihydroorotate from bicarbonate: step 1/3. In terms of biological role, small subunit of the glutamine-dependent carbamoyl phosphate synthetase (CPSase). CPSase catalyzes the formation of carbamoyl phosphate from the ammonia moiety of glutamine, carbonate, and phosphate donated by ATP, constituting the first step of 2 biosynthetic pathways, one leading to arginine and/or urea and the other to pyrimidine nucleotides. The small subunit (glutamine amidotransferase) binds and cleaves glutamine to supply the large subunit with the substrate ammonia. The polypeptide is Carbamoyl phosphate synthase small chain (Oceanobacillus iheyensis (strain DSM 14371 / CIP 107618 / JCM 11309 / KCTC 3954 / HTE831)).